We begin with the raw amino-acid sequence, 377 residues long: NAC domain-containing protein 76 (377 aa).

The NAC domain occupies 10 to 159 (VPPGFRFHPT…GWVVCRAFKK (150 aa)). The DNA-binding element occupies 110 to 165 (IGMRKTLVFYKGRAPNGQKTDWIMHEYRLESDENAPPQEEGWVVCRAFKKKPMTGQ). The disordered stretch occupies residues 312–347 (GVSGFGGHHEEDNNKIGHYNNEESNNKGSVETASST). Basic and acidic residues predominate over residues 318 to 336 (GHHEEDNNKIGHYNNEESN). Residues 337 to 347 (NKGSVETASST) show a composition bias toward polar residues.

It belongs to the plant vascular related NAC-domain protein family. Interacts with NAC030/VND7. As to expression, detected in root protoxylem and metaxylem poles and in vessels of protoxylems, outermost metaxylems, inner metaxylems, shoots and hypocotyls. Expressed in roots, hypocotyls, cotyledons and leaves. Present in developing xylems. Specifically expressed in vessels but not in interfascicular fibers in stems.

It is found in the nucleus. Its function is as follows. Transcription activator that binds to the secondary wall NAC binding element (SNBE), 5'-(T/A)NN(C/T)(T/C/G)TNNNNNNNA(A/C)GN(A/C/T)(A/T)-3', in the promoter of target genes. Involved in xylem formation by promoting the expression of secondary wall-associated transcription factors and of genes involved in secondary wall biosynthesis and programmed cell death, genes driven by the secondary wall NAC binding element (SNBE). Triggers thickening of secondary walls. The protein is NAC domain-containing protein 76 of Arabidopsis thaliana (Mouse-ear cress).